The chain runs to 459 residues: Ribulose bisphosphate carboxylase/oxygenase activase, chloroplastic (459 aa).

164–171 is an ATP binding site; sequence GGKGQGKS.

This sequence belongs to the RuBisCO activase family.

It is found in the plastid. Its subcellular location is the chloroplast stroma. Functionally, activation of RuBisCO (ribulose-1,5-bisphosphate carboxylase/oxygenase; EC 4.1.1.39) involves the ATP-dependent carboxylation of the epsilon-amino group of lysine leading to a carbamate structure. The polypeptide is Ribulose bisphosphate carboxylase/oxygenase activase, chloroplastic (Solanum pennellii (Tomato)).